A 480-amino-acid polypeptide reads, in one-letter code: Glycogen synthase (480 aa).

ADP-alpha-D-glucose is bound at residue lysine 15.

It belongs to the glycosyltransferase 1 family. Bacterial/plant glycogen synthase subfamily.

It carries out the reaction [(1-&gt;4)-alpha-D-glucosyl](n) + ADP-alpha-D-glucose = [(1-&gt;4)-alpha-D-glucosyl](n+1) + ADP + H(+). The protein operates within glycan biosynthesis; glycogen biosynthesis. Functionally, synthesizes alpha-1,4-glucan chains using ADP-glucose. This chain is Glycogen synthase, found in Rhizobium rhizogenes (strain K84 / ATCC BAA-868) (Agrobacterium radiobacter).